A 567-amino-acid chain; its full sequence is Proline--tRNA ligase (567 aa).

This sequence belongs to the class-II aminoacyl-tRNA synthetase family. ProS type 1 subfamily. Homodimer.

It localises to the cytoplasm. The catalysed reaction is tRNA(Pro) + L-proline + ATP = L-prolyl-tRNA(Pro) + AMP + diphosphate. In terms of biological role, catalyzes the attachment of proline to tRNA(Pro) in a two-step reaction: proline is first activated by ATP to form Pro-AMP and then transferred to the acceptor end of tRNA(Pro). As ProRS can inadvertently accommodate and process non-cognate amino acids such as alanine and cysteine, to avoid such errors it has two additional distinct editing activities against alanine. One activity is designated as 'pretransfer' editing and involves the tRNA(Pro)-independent hydrolysis of activated Ala-AMP. The other activity is designated 'posttransfer' editing and involves deacylation of mischarged Ala-tRNA(Pro). The misacylated Cys-tRNA(Pro) is not edited by ProRS. The polypeptide is Proline--tRNA ligase (Staphylococcus aureus (strain COL)).